The primary structure comprises 172 residues: Small ribosomal subunit protein uS5 (172 aa).

Residues 15–78 (LNDKLIFINR…ANAKRNLSRI (64 aa)) form the S5 DRBM domain.

The protein belongs to the universal ribosomal protein uS5 family. In terms of assembly, part of the 30S ribosomal subunit. Contacts proteins S4 and S8.

In terms of biological role, with S4 and S12 plays an important role in translational accuracy. Its function is as follows. Located at the back of the 30S subunit body where it stabilizes the conformation of the head with respect to the body. The protein is Small ribosomal subunit protein uS5 of Dehalococcoides mccartyi (strain ATCC BAA-2266 / KCTC 15142 / 195) (Dehalococcoides ethenogenes (strain 195)).